A 390-amino-acid polypeptide reads, in one-letter code: Large ribosomal subunit protein mL44 (390 aa).

The transit peptide at 1–59 (MGIVLKRAIAAGMKPFPNSTWHWSRTIRPFSQHLSSTCFLQQSSRFTSKRYLHLSTLTQ) directs the protein to the mitochondrion. Residues 139 to 205 (AFVNTVPTNK…LAHIAKYWGI (67 aa)) form the RNase III domain. One can recognise a DRBM domain in the interval 302-372 (QPTRELAMLC…ATDALMKWYC (71 aa)).

This sequence belongs to the ribonuclease III family. Mitochondrion-specific ribosomal protein mL44 subfamily. As to quaternary structure, component of the mitochondrial large ribosomal subunit (mt-LSU). Mature yeast 74S mitochondrial ribosomes consist of a small (37S) and a large (54S) subunit. The 37S small subunit contains a 15S ribosomal RNA (15S mt-rRNA) and 34 different proteins. The 54S large subunit contains a 21S rRNA (21S mt-rRNA) and 46 different proteins. mL44 forms a heterodimer with mL57 and stabilizes rRNA expansion segments 1/2 at a membrane-facing protuberance close to the point of attachment of the ribosome to the translocon in the membrane.

It localises to the mitochondrion. In terms of biological role, component of the mitochondrial ribosome (mitoribosome), a dedicated translation machinery responsible for the synthesis of mitochondrial genome-encoded proteins, including at least some of the essential transmembrane subunits of the mitochondrial respiratory chain. The mitoribosomes are attached to the mitochondrial inner membrane and translation products are cotranslationally integrated into the membrane. This Saccharomyces cerevisiae (strain ATCC 204508 / S288c) (Baker's yeast) protein is Large ribosomal subunit protein mL44 (MRPL3).